The following is a 162-amino-acid chain: Transcriptional repressor NrdR (162 aa).

A zinc finger spans residues 3–34 (CPFCQFEGLKVTDSRDAMEMNAIRRRRECLNC). The region spanning 48 to 138 (VQVQKRDGTY…VYKRFKDLGE (91 aa)) is the ATP-cone domain.

Belongs to the NrdR family. Zn(2+) serves as cofactor.

Negatively regulates transcription of bacterial ribonucleotide reductase nrd genes and operons by binding to NrdR-boxes. This Protochlamydia amoebophila (strain UWE25) protein is Transcriptional repressor NrdR.